The following is a 342-amino-acid chain: P21 prophage-derived major head protein (342 aa).

The protein belongs to the lambda phage major capsid protein family.

The protein is P21 prophage-derived major head protein of Escherichia coli O6:H1 (strain CFT073 / ATCC 700928 / UPEC).